Reading from the N-terminus, the 506-residue chain is Xaa-Pro aminopeptidase 3 (506 aa).

Residues 1–31 (MLSLLSTPRLVPVIARLRGLSGCMSCLQRRY) constitute a mitochondrion transit peptide. The segment at 54–79 (HPHLLRPGEVTPGLSQVEYALRRHKL) is interaction with TNFRSF1B. Residues Tyr300, Asp331, Asp342, His423, His430, Glu450, and Glu474 each coordinate substrate. Residues Asp331, Asp342, and His423 each contribute to the Mn(2+) site. Positions 450 and 474 each coordinate Mn(2+).

This sequence belongs to the peptidase M24B family. In terms of assembly, homodimer. Interacts with TNFRSF1B/TNFR2 (activated) and TRAF2. Mn(2+) is required as a cofactor. As to expression, expressed in the kidney, specifically in intercalated cells, but not in principal cells, of the distal convoluted tubule and cortical collecting duct (at protein level).

It localises to the mitochondrion. The protein resides in the cytoplasm. The catalysed reaction is Release of any N-terminal amino acid, including proline, that is linked to proline, even from a dipeptide or tripeptide.. Catalyzes the removal of a penultimate prolyl residue from the N-termini of peptides, such as Leu-Pro-Ala. Also shows low activity towards peptides with Ala or Ser at the P1 position. Promotes TNFRSF1B-mediated phosphorylation of MAPK8/JNK1 and MAPK9/JNK2, suggesting a function as an adapter protein for TNFRSF1B; the effect is independent of XPNPEP3 peptidase activity. May inhibit apoptotic cell death induced via TNF-TNFRSF1B signaling. The sequence is that of Xaa-Pro aminopeptidase 3 (Xpnpep3) from Rattus norvegicus (Rat).